The following is a 357-amino-acid chain: Sulfate/thiosulfate import ATP-binding protein CysA (357 aa).

The ABC transporter domain occupies 3–237 (IQIQGVSKQY…PASPFVYDFL (235 aa)). 35-42 (GPSGSGKT) provides a ligand contact to ATP.

The protein belongs to the ABC transporter superfamily. Sulfate/tungstate importer (TC 3.A.1.6) family. As to quaternary structure, the complex is composed of two ATP-binding proteins (CysA), two transmembrane proteins (CysT and CysW) and a solute-binding protein (CysP).

Its subcellular location is the cell membrane. It carries out the reaction sulfate(out) + ATP + H2O = sulfate(in) + ADP + phosphate + H(+). The enzyme catalyses thiosulfate(out) + ATP + H2O = thiosulfate(in) + ADP + phosphate + H(+). Its function is as follows. Part of the ABC transporter complex CysAWTP involved in sulfate/thiosulfate import. Responsible for energy coupling to the transport system. In Bacillus cereus (strain ATCC 10987 / NRS 248), this protein is Sulfate/thiosulfate import ATP-binding protein CysA.